The following is a 68-amino-acid chain: Sperm-associated antigen 11A (68 aa).

The N-terminal stretch at 1 to 19 (MKVLLLFAVFFCLVQRNSG) is a signal peptide. Intrachain disulfides connect Cys-30–Cys-59, Cys-37–Cys-52, and Cys-42–Cys-60.

This sequence belongs to the beta-defensin family. Only expressed in epididymis (middle part of the caput).

Its subcellular location is the secreted. Functionally, has antimicrobial activity against E.coli. Plays a role in the defense response in the male reproductive tract, contributing to sperm maturation, storage and protection. In Rattus norvegicus (Rat), this protein is Sperm-associated antigen 11A.